The chain runs to 555 residues: Formate--tetrahydrofolate ligase (555 aa).

65-72 contacts ATP; it reads TPAGEGKT.

This sequence belongs to the formate--tetrahydrofolate ligase family.

The enzyme catalyses (6S)-5,6,7,8-tetrahydrofolate + formate + ATP = (6R)-10-formyltetrahydrofolate + ADP + phosphate. Its pathway is one-carbon metabolism; tetrahydrofolate interconversion. This chain is Formate--tetrahydrofolate ligase, found in Syntrophomonas wolfei subsp. wolfei (strain DSM 2245B / Goettingen).